A 259-amino-acid polypeptide reads, in one-letter code: Ribonuclease PH (259 aa).

Residues Arg-88 and 126 to 128 (GTR) each bind phosphate.

Belongs to the RNase PH family. As to quaternary structure, homohexameric ring arranged as a trimer of dimers.

It catalyses the reaction tRNA(n+1) + phosphate = tRNA(n) + a ribonucleoside 5'-diphosphate. In terms of biological role, phosphorolytic 3'-5' exoribonuclease that plays an important role in tRNA 3'-end maturation. Removes nucleotide residues following the 3'-CCA terminus of tRNAs; can also add nucleotides to the ends of RNA molecules by using nucleoside diphosphates as substrates, but this may not be physiologically important. Probably plays a role in initiation of 16S rRNA degradation (leading to ribosome degradation) during starvation. This Mycobacterium avium (strain 104) protein is Ribonuclease PH.